The primary structure comprises 333 residues: G-protein coupled receptor 146 (333 aa).

At 1–22 (MWSCGPLNSTAWAEEPLCRNLR) the chain is on the extracellular side. N-linked (GlcNAc...) asparagine glycosylation is present at Asn-8. The chain crosses the membrane as a helical span at residues 23 to 43 (LGLWVLSLLYLGAGVPVSLGY). At 44-64 (NALLVLANLASKNTMTMPDVY) the chain is on the cytoplasmic side. Residues 65-85 (FVNMAVAGLVLTALAPAYLLG) form a helical membrane-spanning segment. Over 86–101 (PAHSRWALWSLSSEAH) the chain is Extracellular. The helical transmembrane segment at 102–122 (VTLLILFNVASLVTMYSTALL) threads the bilayer. Over 123–145 (SLDYYIERALPRTYMASVYNTRH) the chain is Cytoplasmic. The chain crosses the membrane as a helical span at residues 146–166 (VCGFVWGGAVLTSFSSLLFYI). Topologically, residues 167 to 188 (CSHVSSRIAECARMQNTEAADA) are extracellular. The helical transmembrane segment at 189–209 (ILVLIGYVVPGLAVLYALALI) threads the bilayer. Residues 210–232 (SRIGKEDTPLDQDTSRLDPSVHR) lie on the Cytoplasmic side of the membrane. Residues 233–253 (LLVATVCTQFGLWTPYYLSLG) form a helical membrane-spanning segment. Topologically, residues 254-277 (HTVLTSRGRTVEGHYLGILQVAKD) are extracellular. Residues 278–298 (LAKFLAFSSSSVTPLLYRYIN) traverse the membrane as a helical segment. At 299–333 (KAFPGKLRRLMKKMHCGRRHCSPDPSGIQQVMAQA) the chain is on the cytoplasmic side.

The protein belongs to the G-protein coupled receptor 1 family.

The protein localises to the cell membrane. GPCR receptor required for the regulation of plasma cholesterol levels. Receptor for CHLSN, a gut derived hormone which mediates an inhibitory effect of intestinal cholesterol absorption on hepatic cholesterol synthesis. Cholesin-binding exerts an antagonistic effect by inhibiting PKA signaling and suppressing SREBF2-controlled cholesterol in the liver. The chain is G-protein coupled receptor 146 (Gpr146) from Mus musculus (Mouse).